The primary structure comprises 718 residues: Auxin response factor 2 (718 aa).

Positions Met1 to Val24 are disordered. The span at Thr8–Gly18 shows a compositional bias: acidic residues. Residues Phe147–Ala249 constitute a DNA-binding region (TF-B3).

This sequence belongs to the ARF family. As to quaternary structure, homo and heterodimers. Expressed in roots, culms, leaves and young panicles.

The protein localises to the nucleus. Its function is as follows. Auxin response factors (ARFs) are transcriptional factors that bind specifically to the DNA sequence 5'-TGTCTC-3' found in the auxin-responsive promoter elements (AuxREs). The protein is Auxin response factor 2 (ARF2) of Oryza sativa subsp. japonica (Rice).